Consider the following 597-residue polypeptide: Elongation factor 4 (597 aa).

A tr-type G domain is found at 2 to 184; it reads KHIRNFSIIA…EIVARIPAPV (183 aa). Residues 14–19 and 131–134 each bind GTP; these read DHGKST and NKID.

The protein belongs to the TRAFAC class translation factor GTPase superfamily. Classic translation factor GTPase family. LepA subfamily.

It localises to the cell inner membrane. It carries out the reaction GTP + H2O = GDP + phosphate + H(+). Functionally, required for accurate and efficient protein synthesis under certain stress conditions. May act as a fidelity factor of the translation reaction, by catalyzing a one-codon backward translocation of tRNAs on improperly translocated ribosomes. Back-translocation proceeds from a post-translocation (POST) complex to a pre-translocation (PRE) complex, thus giving elongation factor G a second chance to translocate the tRNAs correctly. Binds to ribosomes in a GTP-dependent manner. The sequence is that of Elongation factor 4 from Aeromonas salmonicida (strain A449).